Reading from the N-terminus, the 684-residue chain is Methionine--tRNA ligase (684 aa).

Residues 14-24 (PYANGAIHLGH) carry the 'HIGH' region motif. The Zn(2+) site is built by C145, C148, C158, and C161. The short motif at 330 to 334 (KMSKS) is the 'KMSKS' region element. An ATP-binding site is contributed by K333. A tRNA-binding domain is found at 582–684 (DFAKLDLRVA…CGIRPGMQVK (103 aa)).

It belongs to the class-I aminoacyl-tRNA synthetase family. MetG type 1 subfamily. As to quaternary structure, homodimer. Zn(2+) is required as a cofactor.

Its subcellular location is the cytoplasm. It catalyses the reaction tRNA(Met) + L-methionine + ATP = L-methionyl-tRNA(Met) + AMP + diphosphate. Its function is as follows. Is required not only for elongation of protein synthesis but also for the initiation of all mRNA translation through initiator tRNA(fMet) aminoacylation. This Haemophilus ducreyi (strain 35000HP / ATCC 700724) protein is Methionine--tRNA ligase.